A 258-amino-acid polypeptide reads, in one-letter code: uncharacterized protein (258 aa).

This is an uncharacterized protein from Haemophilus influenzae (Bacteriophage HP1).